Here is a 638-residue protein sequence, read N- to C-terminus: 1-deoxy-D-xylulose-5-phosphate synthase (638 aa).

Thiamine diphosphate-binding positions include histidine 72 and 113–115; that span reads GHA. Aspartate 144 is a binding site for Mg(2+). Residues 145-146, asparagine 174, tyrosine 287, and glutamate 370 each bind thiamine diphosphate; that span reads GA. Asparagine 174 is a binding site for Mg(2+).

Belongs to the transketolase family. DXPS subfamily. Homodimer. Mg(2+) serves as cofactor. Thiamine diphosphate is required as a cofactor.

The catalysed reaction is D-glyceraldehyde 3-phosphate + pyruvate + H(+) = 1-deoxy-D-xylulose 5-phosphate + CO2. It functions in the pathway metabolic intermediate biosynthesis; 1-deoxy-D-xylulose 5-phosphate biosynthesis; 1-deoxy-D-xylulose 5-phosphate from D-glyceraldehyde 3-phosphate and pyruvate: step 1/1. Its function is as follows. Catalyzes the acyloin condensation reaction between C atoms 2 and 3 of pyruvate and glyceraldehyde 3-phosphate to yield 1-deoxy-D-xylulose-5-phosphate (DXP). The sequence is that of 1-deoxy-D-xylulose-5-phosphate synthase from Thermosynechococcus vestitus (strain NIES-2133 / IAM M-273 / BP-1).